The chain runs to 149 residues: Sperm surface protein Sp17 (149 aa).

Residues 83-96 show a composition bias toward basic and acidic residues; the sequence is CEQELAKSSGREET. A disordered region spans residues 83–114; it reads CEQELAKSSGREETPVTPFEESTEEEREQEEA. Residues 103-113 are compositionally biased toward acidic residues; it reads ESTEEEREQEE. Positions 112–141 constitute an IQ domain; it reads EEAAALKIQSLFRGHVAREEVKKMKSDKNE.

Homodimer. May interact with ROPN1. In terms of tissue distribution, testis- and sperm-specific.

It is found in the membrane. Its function is as follows. Sperm surface zona pellucida binding protein. Helps to bind spermatozoa to the zona pellucida with high affinity. Might function in binding zona pellucida and carbohydrates. This chain is Sperm surface protein Sp17 (Spa17), found in Mus musculus (Mouse).